Consider the following 1060-residue polypeptide: Beta-galactosidase (1060 aa).

The substrate site is built by Asn-110 and Asp-209. Na(+) is bound at residue Asp-209. The Mg(2+) site is built by Glu-432, His-434, and Glu-477. Substrate-binding positions include Glu-477 and 553-556 (EYAH). Residue Glu-477 is the Proton donor of the active site. Glu-553 serves as the catalytic Nucleophile. Asn-613 is a binding site for Mg(2+). Residues Phe-617 and Asn-620 each coordinate Na(+). Positions 620 and 1035 each coordinate substrate.

Belongs to the glycosyl hydrolase 2 family. In terms of assembly, homotetramer. It depends on Mg(2+) as a cofactor. The cofactor is Na(+).

It catalyses the reaction Hydrolysis of terminal non-reducing beta-D-galactose residues in beta-D-galactosides.. This chain is Beta-galactosidase, found in Yersinia pestis bv. Antiqua (strain Antiqua).